A 58-amino-acid chain; its full sequence is uncharacterized protein (58 aa).

The protein localises to the plastid. The protein resides in the chloroplast. This is an uncharacterized protein from Chlamydomonas reinhardtii (Chlamydomonas smithii).